A 230-amino-acid chain; its full sequence is Large ribosomal subunit protein uL1 (230 aa).

Belongs to the universal ribosomal protein uL1 family. Part of the 50S ribosomal subunit.

Functionally, binds directly to 23S rRNA. The L1 stalk is quite mobile in the ribosome, and is involved in E site tRNA release. Its function is as follows. Protein L1 is also a translational repressor protein, it controls the translation of the L11 operon by binding to its mRNA. The polypeptide is Large ribosomal subunit protein uL1 (Limosilactobacillus fermentum (strain NBRC 3956 / LMG 18251) (Lactobacillus fermentum)).